The chain runs to 345 residues: Protein D345L (345 aa).

The protein belongs to the asfivirus D345L family. Interacts with IKKA/CHUK and IKBKB.

Its subcellular location is the host cytoplasm. Functionally, plays a role in the negative regulation of host NF-kappa-B signaling pathway. Mechanistically, recruits IKKA/CHUK and IKBKB to suppress their kinase activity towards NFKBIA. In Ornithodoros (relapsing fever ticks), this protein is Protein D345L.